The primary structure comprises 176 residues: Transcriptional repressor NrdR (176 aa).

A zinc finger spans residues 3–34; that stretch reads CPYCGSLETQVKDSRPTDDASAIRRRRVCPDC. The ATP-cone domain occupies 49–139; it reads LTVLKKSGRR…VYRNFREARD (91 aa). Positions 147-176 are disordered; the sequence is LDGAAQPEAPSKDDGGTDEPPAKTRAPTRA.

This sequence belongs to the NrdR family. Zn(2+) is required as a cofactor.

In terms of biological role, negatively regulates transcription of bacterial ribonucleotide reductase nrd genes and operons by binding to NrdR-boxes. The sequence is that of Transcriptional repressor NrdR from Methylocella silvestris (strain DSM 15510 / CIP 108128 / LMG 27833 / NCIMB 13906 / BL2).